A 585-amino-acid chain; its full sequence is GRR1-like protein 1 (585 aa).

An F-box domain is found at 1–48 (MGLRFPPKVLEHILSFIDSNEDRNSVSLVCKSWFETERKTRKRVFVGN). Residue Lys70 participates in 1D-myo-inositol hexakisphosphate binding. The interaction with auxin-responsive proteins stretch occupies residues 77–78 (DY). 1D-myo-inositol hexakisphosphate-binding positions include 109 to 110 (KR) and Arg340. The segment at 343–348 (PSEPDL) is interaction with auxin-responsive proteins. 397 to 399 (CFR) lines the 1D-myo-inositol hexakisphosphate pocket. Residues 401–405 (CVIEP) are interaction with auxin-responsive proteins. Position 432 (Arg432) interacts with 1D-myo-inositol hexakisphosphate. Positions 460–461 (AF) are interaction with auxin-responsive proteins. Residues 480 to 481 (KK) and Arg505 each bind 1D-myo-inositol hexakisphosphate.

Part of a SCF (SKP1-cullin-F-box) protein ligase complex. Interacts with CUL1, SKP1A/ASK1 and SKP1B/ASK2. Interacts with Aux/IAA proteins (IAA7 and IAA12) in an auxin-dependent manner. As to expression, ubiquitous.

It is found in the nucleus. Its pathway is protein modification; protein ubiquitination. Its function is as follows. Component of SCF(ASK-cullin-F-box) E3 ubiquitin ligase complexes, which may mediate the ubiquitination and subsequent proteasomal degradation of target proteins. Auxin receptor that mediates Aux/IAA proteins proteasomal degradation and auxin-regulated transcription. Involved in embryogenesis regulation by auxin. Confers sensitivity to the virulent bacterial pathogen P.syringae. Mediates glucose repression in yeast. In Arabidopsis thaliana (Mouse-ear cress), this protein is GRR1-like protein 1 (GRH1).